The following is a 738-amino-acid chain: Dipeptidyl peptidase 3 (738 aa).

An N-acetylalanine modification is found at Ala-2. His-450 contributes to the Zn(2+) binding site. Residue Glu-451 is part of the active site. Zn(2+) is bound by residues His-455 and Glu-508.

Belongs to the peptidase M49 family. Zn(2+) is required as a cofactor.

The protein resides in the cytoplasm. It catalyses the reaction Release of an N-terminal dipeptide from a peptide comprising four or more residues, with broad specificity. Also acts on dipeptidyl 2-naphthylamides.. With respect to regulation, inhibited by spinorphin, an opioid peptide derived from hemoglobin. In terms of biological role, cleaves and degrades bioactive peptides, including angiotensin, Leu-enkephalin and Met-enkephalin. Also cleaves Arg-Arg-beta-naphthylamide. This chain is Dipeptidyl peptidase 3 (Dpp3), found in Rattus norvegicus (Rat).